A 191-amino-acid polypeptide reads, in one-letter code: ATP synthase subunit b (191 aa).

A helical membrane pass occupies residues 10–30; the sequence is FLVPGPTAIAELIVFLLILFI. The segment at 170–191 is disordered; that stretch reads RAQRQPAASDVVGGQQREEVHR.

This sequence belongs to the ATPase B chain family. F-type ATPases have 2 components, F(1) - the catalytic core - and F(0) - the membrane proton channel. F(1) has five subunits: alpha(3), beta(3), gamma(1), delta(1), epsilon(1). F(0) has three main subunits: a(1), b(2) and c(10-14). The alpha and beta chains form an alternating ring which encloses part of the gamma chain. F(1) is attached to F(0) by a central stalk formed by the gamma and epsilon chains, while a peripheral stalk is formed by the delta and b chains.

It localises to the cell membrane. F(1)F(0) ATP synthase produces ATP from ADP in the presence of a proton or sodium gradient. F-type ATPases consist of two structural domains, F(1) containing the extramembraneous catalytic core and F(0) containing the membrane proton channel, linked together by a central stalk and a peripheral stalk. During catalysis, ATP synthesis in the catalytic domain of F(1) is coupled via a rotary mechanism of the central stalk subunits to proton translocation. Functionally, component of the F(0) channel, it forms part of the peripheral stalk, linking F(1) to F(0). This is ATP synthase subunit b from Acidothermus cellulolyticus (strain ATCC 43068 / DSM 8971 / 11B).